A 488-amino-acid polypeptide reads, in one-letter code: Ribosomal protein uS12 methylthiotransferase RimO (488 aa).

Residues R4 to E120 form the MTTase N-terminal domain. The [4Fe-4S] cluster site is built by C13, C49, C83, C155, C159, and C162. One can recognise a Radical SAM core domain in the interval S141 to K377. The region spanning A380–D448 is the TRAM domain.

This sequence belongs to the methylthiotransferase family. RimO subfamily. [4Fe-4S] cluster serves as cofactor.

The protein resides in the cytoplasm. It carries out the reaction L-aspartate(89)-[ribosomal protein uS12]-hydrogen + (sulfur carrier)-SH + AH2 + 2 S-adenosyl-L-methionine = 3-methylsulfanyl-L-aspartate(89)-[ribosomal protein uS12]-hydrogen + (sulfur carrier)-H + 5'-deoxyadenosine + L-methionine + A + S-adenosyl-L-homocysteine + 2 H(+). Catalyzes the methylthiolation of an aspartic acid residue of ribosomal protein uS12. The protein is Ribosomal protein uS12 methylthiotransferase RimO of Sorangium cellulosum (strain So ce56) (Polyangium cellulosum (strain So ce56)).